Here is a 131-residue protein sequence, read N- to C-terminus: MIPDRIIEQGTLRTDGPRAAVEVRLPWYRALPGSCIAGAELTIDGKTAPAESLRWEMNGAEFTFDELRTNIDEWWFPTDSAVLSGDLDIEADAEHEVTVGLTLYIPYIIISDTETLHIDEKNTKTMKAVAA.

Belongs to the C-glycoside deglycosidase beta subunit family. In terms of assembly, heterodimer composed of an alpha subunit (CarB) and a beta subunit (CarC). Requires a divalent metal cation as cofactor.

It catalyses the reaction 3''-dehydroisovitexin = 1,5-anhydro-D-erythro-hex-1-en-3-ulose + apigenin. The catalysed reaction is 3''-dehydroisoorientin = 1,5-anhydro-D-erythro-hex-1-en-3-ulose + luteolin. Functionally, carbon-carbon bond-cleaving enzyme which participates in the metabolism of C-glycosides. Acts on the C6-glycosylated compounds 3''-dehydroisovitexin (3''-oxo-isovitexin) and 3''-dehydroisoorientin (3''-oxo-homoorientin). Shows weak activity with 3'-dehydromangiferin (3'-oxo-mangiferin). This Microbacterium trichothecenolyticum (Aureobacterium trichothecenolyticum) protein is C-glycoside deglycosidase beta subunit.